Consider the following 95-residue polypeptide: Aspartyl/glutamyl-tRNA(Asn/Gln) amidotransferase subunit C (95 aa).

This sequence belongs to the GatC family. In terms of assembly, heterotrimer of A, B and C subunits.

It catalyses the reaction L-glutamyl-tRNA(Gln) + L-glutamine + ATP + H2O = L-glutaminyl-tRNA(Gln) + L-glutamate + ADP + phosphate + H(+). The catalysed reaction is L-aspartyl-tRNA(Asn) + L-glutamine + ATP + H2O = L-asparaginyl-tRNA(Asn) + L-glutamate + ADP + phosphate + 2 H(+). Functionally, allows the formation of correctly charged Asn-tRNA(Asn) or Gln-tRNA(Gln) through the transamidation of misacylated Asp-tRNA(Asn) or Glu-tRNA(Gln) in organisms which lack either or both of asparaginyl-tRNA or glutaminyl-tRNA synthetases. The reaction takes place in the presence of glutamine and ATP through an activated phospho-Asp-tRNA(Asn) or phospho-Glu-tRNA(Gln). The protein is Aspartyl/glutamyl-tRNA(Asn/Gln) amidotransferase subunit C of Azoarcus sp. (strain BH72).